Reading from the N-terminus, the 310-residue chain is Homoserine kinase (310 aa).

91-101 provides a ligand contact to ATP; that stretch reads PIGSGLGSSAC.

Belongs to the GHMP kinase family. Homoserine kinase subfamily.

The protein resides in the cytoplasm. It catalyses the reaction L-homoserine + ATP = O-phospho-L-homoserine + ADP + H(+). It functions in the pathway amino-acid biosynthesis; L-threonine biosynthesis; L-threonine from L-aspartate: step 4/5. In terms of biological role, catalyzes the ATP-dependent phosphorylation of L-homoserine to L-homoserine phosphate. This is Homoserine kinase from Escherichia coli O6:H1 (strain CFT073 / ATCC 700928 / UPEC).